A 204-amino-acid chain; its full sequence is N-(5'-phosphoribosyl)anthranilate isomerase (204 aa).

Belongs to the TrpF family.

It carries out the reaction N-(5-phospho-beta-D-ribosyl)anthranilate = 1-(2-carboxyphenylamino)-1-deoxy-D-ribulose 5-phosphate. Its pathway is amino-acid biosynthesis; L-tryptophan biosynthesis; L-tryptophan from chorismate: step 3/5. This is N-(5'-phosphoribosyl)anthranilate isomerase from Bacillus anthracis (strain A0248).